Here is a 468-residue protein sequence, read N- to C-terminus: F-box/LRR-repeat protein At4g14096 (468 aa).

Residues 7–60 enclose the F-box domain; that stretch reads RDIISSLPEAISCHILSFLPTKEAASTSVLSKKWRYLFAFVPNLDLDESVYLNP. LRR repeat units lie at residues 114–136, 138–167, 169–194, 216–241, 292–323, and 324–349; these read VSDLDLHVYMETEFVFPSEMFLS, TLVRLKLMLYPLLEFEDVYLPKLKTLYIDS, YFEKYGIGLTKLLSGCPILEDLVLDD, STQVRDEFPKSVSIDTPNLVYLKFTD, TLYLSSNTLQVLTYSCDAIPIFNNLTHLTIES, and NPEVGWQSLPGLLKNSPNLETLIFQG.

The chain is F-box/LRR-repeat protein At4g14096 from Arabidopsis thaliana (Mouse-ear cress).